The sequence spans 205 residues: Red chlorophyll catabolite reductase (205 aa).

Residues Glu-39 and Asp-175 each coordinate substrate.

As to quaternary structure, homodimer. In terms of processing, the N-terminus is blocked. As to expression, in etiolated and green primary leaves. Low amount in roots.

It localises to the plastid. The protein localises to the chloroplast stroma. The catalysed reaction is primary fluorescent chlorophyll catabolite + 2 oxidized [2Fe-2S]-[ferredoxin] = red chlorophyll catabolite + 2 reduced [2Fe-2S]-[ferredoxin] + 3 H(+). It functions in the pathway porphyrin-containing compound metabolism; chlorophyll degradation. Catalyzes the key reaction of chlorophyll catabolism, porphyrin macrocycle cleavage of pheophorbide a (pheide a) to a primary fluorescent catabolite (pFCC). Works in a two-step reaction with pheophorbide a oxygenase (PaO) by reducing the C20/C1 double bond of the intermediate, RCC. This chain is Red chlorophyll catabolite reductase (rccR), found in Hordeum vulgare (Barley).